We begin with the raw amino-acid sequence, 101 residues long: Apolipoprotein C-II (101 aa).

The signal sequence occupies residues 1-22; the sequence is MGTRFLLALFLVLLVLGFEVQG. The interval 66-74 is lipid binding; that stretch reads AVDEKLRDM. A lipoprotein lipase cofactor region spans residues 78–101; the sequence is STAAVSTYAGIFTDQVLSMLRGEE.

Belongs to the apolipoprotein C2 family. Proapolipoprotein C-II is synthesized as a sialic acid containing glycoprotein which is subsequently desialylated prior to its proteolytic processing. Post-translationally, proapolipoprotein C-II, the major form found in plasma undergoes proteolytic cleavage of its N-terminal hexapeptide to generate apolipoprotein C-II, which occurs as the minor form in plasma.

It localises to the secreted. In terms of biological role, component of chylomicrons, very low-density lipoproteins (VLDL), low-density lipoproteins (LDL), and high-density lipoproteins (HDL) in plasma. Plays an important role in lipoprotein metabolism as an activator of lipoprotein lipase. Both proapolipoprotein C-II and apolipoprotein C-II can activate lipoprotein lipase. The chain is Apolipoprotein C-II (APOC2) from Saimiri boliviensis boliviensis (Bolivian squirrel monkey).